The chain runs to 56 residues: MGQMVPPRSIQNEDFWKNPWDVGGLTVIGLFTSTFLLFVLFAVVFGYVEKAVFEEE.

Residues 25–45 (LTVIGLFTSTFLLFVLFAVVF) form a helical membrane-spanning segment.

Homooligomer. Can also form heterooligomers with other sarcoplasmic/endoplasmic reticulum calcium ATPase (SERCA) regulators ARLN, PLN, SLN and STRIT1/DWORF. Monomer. Interacts as a monomer with ATP2A2/SERCA2; the interaction results in inhibition of ATP2A2 Ca(2+) affinity. Largely expressed in non-muscle tissues with the exception of weak expression in body wall muscles at 14.5 dpc. Expressed in epithelial cells of the trachea, bronchus, lung, intestine, pancreas, and liver.

The protein localises to the endoplasmic reticulum membrane. Functionally, inhibits the activity of the calcium ATPases ATP2A2/SERCA2 and ATP2A3/SERCA3 by decreasing their apparent affinity for Ca(2+). In Mus musculus (Mouse), this protein is Endoregulin (Erln).